We begin with the raw amino-acid sequence, 274 residues long: Thiamine kinase (274 aa).

The protein belongs to the thiamine kinase family.

It carries out the reaction thiamine + ATP = thiamine phosphate + ADP + H(+). Its pathway is cofactor biosynthesis; thiamine diphosphate biosynthesis; thiamine phosphate from thiamine: step 1/1. Its function is as follows. Catalyzes the ATP-dependent phosphorylation of thiamine to thiamine phosphate. Is involved in thiamine salvage. In Escherichia coli O17:K52:H18 (strain UMN026 / ExPEC), this protein is Thiamine kinase.